Here is a 313-residue protein sequence, read N- to C-terminus: Intelectin-1b (313 aa).

A signal peptide spans 1–19 (MTQLGFLLFIMIATRVCSA). One can recognise a Fibrinogen C-terminal domain in the interval 32–251 (SFFSSLPRSC…NNERAASALC (220 aa)). Residues Cys41 and Cys70 are joined by a disulfide bond. Residues His86, Glu87, Asn89, Gly92, Gly97, Asp98, and Asp133 each contribute to the Ca(2+) site. Intrachain disulfides connect Cys94–Cys280, Cys199–Cys259, and Cys251–Cys265. A glycan (N-linked (GlcNAc...) asparagine) is linked at Asn163. The Ca(2+) site is built by Asn260, Glu262, Glu274, and Asp282. A carbohydrate contacts are provided by residues 262-263 (EH) and Glu274. The GPI-anchor amidated serine moiety is linked to residue Ser298. The propeptide occupies 299–313 (NSREITEAAVLLFYR).

In terms of tissue distribution, expressed in the globlet and Paneth cells of the small intestine of infected mice. Expressed in the ileum of uninfected mice.

The protein resides in the cell membrane. The protein localises to the secreted. Its function is as follows. May play a protective role in the innate immune response to parasite infection. The sequence is that of Intelectin-1b (Itln1b) from Mus musculus (Mouse).